Consider the following 265-residue polypeptide: 1-(5-phosphoribosyl)-5-[(5-phosphoribosylamino)methylideneamino] imidazole-4-carboxamide isomerase (265 aa).

Residue Asp-8 is the Proton acceptor of the active site. Asp-139 acts as the Proton donor in catalysis.

This sequence belongs to the HisA/HisF family.

The protein localises to the cytoplasm. The enzyme catalyses 1-(5-phospho-beta-D-ribosyl)-5-[(5-phospho-beta-D-ribosylamino)methylideneamino]imidazole-4-carboxamide = 5-[(5-phospho-1-deoxy-D-ribulos-1-ylimino)methylamino]-1-(5-phospho-beta-D-ribosyl)imidazole-4-carboxamide. It functions in the pathway amino-acid biosynthesis; L-histidine biosynthesis; L-histidine from 5-phospho-alpha-D-ribose 1-diphosphate: step 4/9. The chain is 1-(5-phosphoribosyl)-5-[(5-phosphoribosylamino)methylideneamino] imidazole-4-carboxamide isomerase from Herminiimonas arsenicoxydans.